A 297-amino-acid polypeptide reads, in one-letter code: Homoserine kinase (297 aa).

82–92 lines the ATP pocket; sequence PLTRGLGSSAS.

The protein belongs to the GHMP kinase family. Homoserine kinase subfamily.

Its subcellular location is the cytoplasm. It catalyses the reaction L-homoserine + ATP = O-phospho-L-homoserine + ADP + H(+). It functions in the pathway amino-acid biosynthesis; L-threonine biosynthesis; L-threonine from L-aspartate: step 4/5. Its function is as follows. Catalyzes the ATP-dependent phosphorylation of L-homoserine to L-homoserine phosphate. This chain is Homoserine kinase, found in Bacillus thuringiensis subsp. konkukian (strain 97-27).